A 476-amino-acid polypeptide reads, in one-letter code: Aspartyl/glutamyl-tRNA(Asn/Gln) amidotransferase subunit B (476 aa).

Belongs to the GatB/GatE family. GatB subfamily. In terms of assembly, heterotrimer of A, B and C subunits.

The enzyme catalyses L-glutamyl-tRNA(Gln) + L-glutamine + ATP + H2O = L-glutaminyl-tRNA(Gln) + L-glutamate + ADP + phosphate + H(+). The catalysed reaction is L-aspartyl-tRNA(Asn) + L-glutamine + ATP + H2O = L-asparaginyl-tRNA(Asn) + L-glutamate + ADP + phosphate + 2 H(+). Allows the formation of correctly charged Asn-tRNA(Asn) or Gln-tRNA(Gln) through the transamidation of misacylated Asp-tRNA(Asn) or Glu-tRNA(Gln) in organisms which lack either or both of asparaginyl-tRNA or glutaminyl-tRNA synthetases. The reaction takes place in the presence of glutamine and ATP through an activated phospho-Asp-tRNA(Asn) or phospho-Glu-tRNA(Gln). This is Aspartyl/glutamyl-tRNA(Asn/Gln) amidotransferase subunit B from Lactobacillus gasseri (strain ATCC 33323 / DSM 20243 / BCRC 14619 / CIP 102991 / JCM 1131 / KCTC 3163 / NCIMB 11718 / NCTC 13722 / AM63).